A 1409-amino-acid polypeptide reads, in one-letter code: DNA-directed RNA polymerase subunit beta' (1409 aa).

Residues cysteine 70, cysteine 72, cysteine 85, and cysteine 88 each coordinate Zn(2+). Residues aspartate 460, aspartate 462, and aspartate 464 each contribute to the Mg(2+) site. Cysteine 822, cysteine 896, cysteine 903, and cysteine 906 together coordinate Zn(2+).

It belongs to the RNA polymerase beta' chain family. In terms of assembly, the RNAP catalytic core consists of 2 alpha, 1 beta, 1 beta' and 1 omega subunit. When a sigma factor is associated with the core the holoenzyme is formed, which can initiate transcription. Mg(2+) serves as cofactor. The cofactor is Zn(2+).

It carries out the reaction RNA(n) + a ribonucleoside 5'-triphosphate = RNA(n+1) + diphosphate. In terms of biological role, DNA-dependent RNA polymerase catalyzes the transcription of DNA into RNA using the four ribonucleoside triphosphates as substrates. The sequence is that of DNA-directed RNA polymerase subunit beta' from Methylobacillus flagellatus (strain ATCC 51484 / DSM 6875 / VKM B-1610 / KT).